The chain runs to 552 residues: DUF724 domain-containing protein 10 (552 aa).

Residues 308–361 form a disordered region; that stretch reads SSLTQGSGDKTEVETQRKTFPKKTLPRNQNGSGNDSTLENENSNRKRKREENLC. Over residues 333 to 348 the composition is skewed to polar residues; it reads PRNQNGSGNDSTLENE. One can recognise a DUF724 domain in the interval 371-543; the sequence is ILFEKKLPVW…LEFQATASAP (173 aa).

Expressed at low levels in leaves, stems, flowers and siliques.

Functionally, may be involved in the polar growth of plant cells via transportation of RNAs. This chain is DUF724 domain-containing protein 10, found in Arabidopsis thaliana (Mouse-ear cress).